Reading from the N-terminus, the 423-residue chain is Gamma-glutamyl phosphate reductase (423 aa).

Belongs to the gamma-glutamyl phosphate reductase family.

The protein localises to the cytoplasm. The catalysed reaction is L-glutamate 5-semialdehyde + phosphate + NADP(+) = L-glutamyl 5-phosphate + NADPH + H(+). The protein operates within amino-acid biosynthesis; L-proline biosynthesis; L-glutamate 5-semialdehyde from L-glutamate: step 2/2. Functionally, catalyzes the NADPH-dependent reduction of L-glutamate 5-phosphate into L-glutamate 5-semialdehyde and phosphate. The product spontaneously undergoes cyclization to form 1-pyrroline-5-carboxylate. In Burkholderia lata (strain ATCC 17760 / DSM 23089 / LMG 22485 / NCIMB 9086 / R18194 / 383), this protein is Gamma-glutamyl phosphate reductase.